The chain runs to 299 residues: Glycine--tRNA ligase alpha subunit (299 aa).

Belongs to the class-II aminoacyl-tRNA synthetase family. In terms of assembly, tetramer of two alpha and two beta subunits.

The protein localises to the cytoplasm. The enzyme catalyses tRNA(Gly) + glycine + ATP = glycyl-tRNA(Gly) + AMP + diphosphate. The sequence is that of Glycine--tRNA ligase alpha subunit from Lactiplantibacillus plantarum (strain ATCC BAA-793 / NCIMB 8826 / WCFS1) (Lactobacillus plantarum).